A 156-amino-acid chain; its full sequence is Ribosomal RNA large subunit methyltransferase H (156 aa).

S-adenosyl-L-methionine contacts are provided by residues leucine 73, glycine 104, and 123 to 128 (LSRLTL).

The protein belongs to the RNA methyltransferase RlmH family. As to quaternary structure, homodimer.

It localises to the cytoplasm. The catalysed reaction is pseudouridine(1915) in 23S rRNA + S-adenosyl-L-methionine = N(3)-methylpseudouridine(1915) in 23S rRNA + S-adenosyl-L-homocysteine + H(+). Functionally, specifically methylates the pseudouridine at position 1915 (m3Psi1915) in 23S rRNA. This is Ribosomal RNA large subunit methyltransferase H from Thiobacillus denitrificans (strain ATCC 25259 / T1).